Consider the following 357-residue polypeptide: Probable cinnamyl alcohol dehydrogenase 7/8 (357 aa).

Position 47 (cysteine 47) interacts with Zn(2+). Serine 49 lines the NADP(+) pocket. Histidine 69, glutamate 70, cysteine 100, cysteine 103, cysteine 106, cysteine 114, and cysteine 163 together coordinate Zn(2+). NADP(+) is bound by residues threonine 167, 188–193, 211–216, threonine 251, glycine 275, and 298–300; these read GLGGVG, SSSDKK, and SFI.

It belongs to the zinc-containing alcohol dehydrogenase family. Homodimer. The cofactor is Zn(2+).

It carries out the reaction (E)-cinnamyl alcohol + NADP(+) = (E)-cinnamaldehyde + NADPH + H(+). The catalysed reaction is (E)-coniferol + NADP(+) = (E)-coniferaldehyde + NADPH + H(+). It catalyses the reaction (E)-sinapyl alcohol + NADP(+) = (E)-sinapaldehyde + NADPH + H(+). The enzyme catalyses (E)-4-coumaroyl alcohol + NADP(+) = (E)-4-coumaraldehyde + NADPH + H(+). It carries out the reaction (E)-caffeyl alcohol + NADP(+) = (E)-caffeyl aldehyde + NADPH + H(+). Its pathway is aromatic compound metabolism; phenylpropanoid biosynthesis. Involved in lignin biosynthesis. Catalyzes the final step specific for the production of lignin monomers. Catalyzes the NADPH-dependent reduction of coniferaldehyde, 5-hydroxyconiferaldehyde, sinapaldehyde, 4-coumaraldehyde and caffeyl aldehyde to their respective alcohols. In Picea abies (Norway spruce), this protein is Probable cinnamyl alcohol dehydrogenase 7/8 (CAD7).